The following is a 285-amino-acid chain: HTH-type transcriptional regulator MurR (285 aa).

One can recognise an HTH rpiR-type domain in the interval 1 to 77; it reads MLYLTKIRNA…MALIGEYSAS (77 aa). Positions 37–56 form a DNA-binding region, H-T-H motif; it reads SRKMAKQLGISQSSIVKFAQ. The SIS domain maps to 128–268; it reads IIEVISKAPF…FVGLVQLNDV (141 aa).

As to quaternary structure, homotetramer.

The protein operates within amino-sugar metabolism; N-acetylmuramate degradation [regulation]. Functionally, represses the expression of the murPQ operon involved in the uptake and degradation of N-acetylmuramic acid (MurNAc). Binds to two adjacent inverted repeats within the operator region. MurNAc 6-phosphate, the substrate of MurQ, is the specific inducer that weakens binding of MurR to the operator. This Shigella sonnei (strain Ss046) protein is HTH-type transcriptional regulator MurR.